Here is a 393-residue protein sequence, read N- to C-terminus: NAD(P)H-quinone oxidoreductase subunit H, chloroplastic (393 aa).

The protein belongs to the complex I 49 kDa subunit family. In terms of assembly, NDH is composed of at least 16 different subunits, 5 of which are encoded in the nucleus.

Its subcellular location is the plastid. The protein resides in the chloroplast thylakoid membrane. It carries out the reaction a plastoquinone + NADH + (n+1) H(+)(in) = a plastoquinol + NAD(+) + n H(+)(out). It catalyses the reaction a plastoquinone + NADPH + (n+1) H(+)(in) = a plastoquinol + NADP(+) + n H(+)(out). Functionally, NDH shuttles electrons from NAD(P)H:plastoquinone, via FMN and iron-sulfur (Fe-S) centers, to quinones in the photosynthetic chain and possibly in a chloroplast respiratory chain. The immediate electron acceptor for the enzyme in this species is believed to be plastoquinone. Couples the redox reaction to proton translocation, and thus conserves the redox energy in a proton gradient. The protein is NAD(P)H-quinone oxidoreductase subunit H, chloroplastic of Nandina domestica (Heavenly bamboo).